Reading from the N-terminus, the 663-residue chain is Alcohol oxidase (663 aa).

8–39 is a binding site for FAD; sequence DVIVCGGGSTGCVIAGRLANVDENLKVLLIEN. Catalysis depends on H567, which acts as the Proton acceptor. A Microbody targeting signal motif is present at residues 661-663; that stretch reads ARY.

This sequence belongs to the GMC oxidoreductase family. As to quaternary structure, homooctamer. FAD is required as a cofactor.

The protein localises to the peroxisome matrix. The enzyme catalyses a primary alcohol + O2 = an aldehyde + H2O2. It participates in energy metabolism; methane degradation. Its function is as follows. Catalyzes the oxidation of methanol to formaldehyde and hydrogen peroxide, the first step in the methanol utilization pathway of methylotrophic yeasts. The protein is Alcohol oxidase (AOD1) of Candida boidinii (Yeast).